Reading from the N-terminus, the 139-residue chain is MVSENEKTRRPKRSIQHRQNKDENNIEIKAVAKFLRASPRKVRSVANTIRGKSVSEAFQVLEMSPKKAARLIEKVLRSAVANAENNANLSSDSLYISRCFVDDGPRYKRIWPRGRGRADIIQRRMCHVTVAVKSIEAKS.

Residues methionine 1 to aspartate 22 form a disordered region. Basic residues predominate over residues arginine 9–arginine 18.

This sequence belongs to the universal ribosomal protein uL22 family. In terms of assembly, part of the 50S ribosomal subunit.

In terms of biological role, this protein binds specifically to 23S rRNA; its binding is stimulated by other ribosomal proteins, e.g. L4, L17, and L20. It is important during the early stages of 50S assembly. It makes multiple contacts with different domains of the 23S rRNA in the assembled 50S subunit and ribosome. Functionally, the globular domain of the protein is located near the polypeptide exit tunnel on the outside of the subunit, while an extended beta-hairpin is found that lines the wall of the exit tunnel in the center of the 70S ribosome. This is Large ribosomal subunit protein uL22 from Pseudothermotoga lettingae (strain ATCC BAA-301 / DSM 14385 / NBRC 107922 / TMO) (Thermotoga lettingae).